The chain runs to 352 residues: Probable RNA methyltransferase CV_2253 (352 aa).

The active-site Proton acceptor is the Glu91. Positions 94–320 constitute a Radical SAM core domain; it reads LLPRDGLCVS…TKVRDSAGQD (227 aa). Cys101 and Cys325 are oxidised to a cystine. [4Fe-4S] cluster-binding residues include Cys108, Cys112, and Cys115. S-adenosyl-L-methionine is bound by residues 153-154, Ser183, 206-208, and Asn282; these read GE and SLH. The S-methylcysteine intermediate role is filled by Cys325.

The protein belongs to the radical SAM superfamily. RlmN family. It depends on [4Fe-4S] cluster as a cofactor.

It is found in the cytoplasm. This is Probable RNA methyltransferase CV_2253 from Chromobacterium violaceum (strain ATCC 12472 / DSM 30191 / JCM 1249 / CCUG 213 / NBRC 12614 / NCIMB 9131 / NCTC 9757 / MK).